We begin with the raw amino-acid sequence, 2774 residues long: Microtubule-associated protein 1A (2774 aa).

A phosphoserine mark is found at S114, S117, S118, S121, and S155. The residue at position 177 (Y177) is a Phosphotyrosine. The segment at 310-329 (PSKIKHRADSKESLKAAPKT) is disordered. Phosphoserine occurs at positions 319 and 322. Repeat 1 spans residues 336–338 (KRE). The interval 336-541 (KREEVLEEGA…TQDFEELKRE (206 aa)) is 11 X 3 AA repeats of K-K-[DE]. Over residues 342–390 (EEGAKEARSELAKELAKTEKKAKEPSEKPPEKPSKSERVRGESSEALKA) the composition is skewed to basic and acidic residues. Disordered stretches follow at residues 342–718 (EEGA…SFLS), 737–808 (TIPG…TELT), 845–939 (EDQS…VGKE), 957–1078 (FGAP…QTGC), 1093–1344 (ETGE…ILPE), 1357–1646 (QKDG…SPEQ), 1693–1725 (ESTF…KDFQ), 1739–1843 (LAES…VPFS), and 1861–2644 (AELE…LVNG). A Phosphoserine modification is found at S384. Over residues 391-406 (EKRRLIKDKAGKKHLK) the composition is skewed to basic residues. Basic and acidic residues-rich tracts occupy residues 407-464 (EKIS…KPDL) and 484-500 (VKVD…ELSS). 9 repeat units span residues 415–417 (KKD), 420–422 (KKE), 424–426 (KKE), 427–429 (RKE), 431–433 (KKE), 436–438 (RKE), 440–442 (KKD), 444–446 (KKD), and 449–451 (RKD). The residue at position 504 (T504) is a Phosphothreonine. Over residues 506 to 516 (PAQKGAAPPAA) the composition is skewed to low complexity. A phosphoserine mark is found at S526 and S527. Basic and acidic residues-rich tracts occupy residues 536 to 554 (EELK…DTGL) and 584 to 595 (EGEHVEREKEVV). Repeat 11 spans residues 539-541 (KRE). S604 and S611 each carry phosphoserine. Composition is skewed to basic and acidic residues over residues 614–631 (EVEK…REAE) and 638–675 (AARE…ETKA). At S643 the chain carries Phosphoserine. T663 bears the Phosphothreonine mark. Phosphoserine is present on residues S666, S677, S690, and S785. 2 stretches are compositionally biased toward polar residues: residues 845–858 (EDQS…PQTE) and 869–881 (TVTS…TEAT). 4 positions are modified to phosphoserine: S872, S875, S876, and S889. Phosphothreonine is present on T892. Phosphoserine occurs at positions 894, 898, 907, 980, 990, 998, 1007, 1013, 1022, 1029, 1037, 1061, 1132, 1134, 1148, 1160, 1178, 1188, 1191, 1197, 1206, and 1209. The span at 1008–1028 (PVEDKSEPRDFQEDSWGETKH) shows a compositional bias: basic and acidic residues. Polar residues predominate over residues 1142-1157 (SVLSVVSPDTTKQEAT). Over residues 1180-1190 (EDTQSLSFSEE) the composition is skewed to polar residues. Over residues 1198-1212 (LDISSKQLSPESLGT) the composition is skewed to polar residues. The span at 1220-1236 (LGKEERGPVMKAEDDSC) shows a compositional bias: basic and acidic residues. Phosphoserine is present on residues S1252, S1280, S1301, S1304, and S1307. Residues 1293–1308 (TSDSSLTKSPESLSSP) show a composition bias toward low complexity. Composition is skewed to basic and acidic residues over residues 1317 to 1336 (WEGK…ETRQ), 1357 to 1409 (QKDG…EDQG), 1416 to 1428 (AEKD…RDTD), 1436 to 1479 (EPRD…EHSI), and 1487 to 1574 (RAPD…KADS). S1504, S1568, S1574, and S1594 each carry phosphoserine. A compositionally biased stretch (basic and acidic residues) spans 1599–1613 (SKAREQEKKYWKEQD). Phosphoserine is present on residues S1622, S1643, S1715, S1742, S1757, S1763, and S1767. Residues 1707 to 1718 (TPLQHTPRSPWT) are compositionally biased toward polar residues. T1772 bears the Phosphothreonine mark. Phosphoserine is present on residues S1778 and S1784. Polar residues predominate over residues 1789 to 1803 (TESTAPMRNEPTTPS). The segment covering 1818–1839 (LPPAPLSPAPAPPTPAPEPHTP) has biased composition (pro residues). The span at 1873–1885 (KDYRKAEGEREGE) shows a compositional bias: basic and acidic residues. Phosphoserine is present on S1897. The segment covering 1908–1930 (ATRDTEQTEPEQREPTPYPDERS) has biased composition (basic and acidic residues). Position 1923 is a phosphothreonine (T1923). Positions 1984–1997 (SSPASPQNLQSDTP) are enriched in polar residues. At S1988 the chain carries Phosphoserine. Residues 2008–2034 (AVPPRQEPDPGPNVEPSITPPAVPPRA) show a composition bias toward pro residues. The residue at position 2026 (T2026) is a Phosphothreonine. Phosphoserine occurs at positions 2043 and 2077. Basic and acidic residues predominate over residues 2055 to 2092 (PDRRTPSPKETGRGHWDDGTNDSDLEKGAREQPEKETR). Low complexity predominate over residues 2115 to 2125 (SSLSSDSHLGS). The span at 2144-2153 (PAPPQLPSPA) shows a compositional bias: pro residues. A phosphoserine mark is found at S2204, S2221, S2225, S2228, S2229, and S2260. Residues 2226 to 2237 (EGSSSEATTPVI) show a composition bias toward polar residues. Positions 2271–2287 (DLTPLSPAPSASLDLAP) are enriched in low complexity. The span at 2288–2298 (APAPAPAPAPG) shows a compositional bias: pro residues. Residues 2299 to 2309 (LPGDLGDGTLP) show a composition bias toward low complexity. Over residues 2352–2364 (AEKEEAEAPHAWE) the composition is skewed to basic and acidic residues. A Phosphoserine modification is found at S2424. Low complexity predominate over residues 2477-2489 (SASDSGSSQSDSD). Pro residues predominate over residues 2534–2550 (DPPPTPLPDPRPSPPRP). Residues 2565 to 2575 (GRVERLREKGR) show a composition bias toward basic and acidic residues. Over residues 2613-2623 (RTVPRPRSTPS) the composition is skewed to low complexity. 2 positions are modified to phosphoserine: S2620 and S2635.

This sequence belongs to the MAP1 family. 3 different light chains, LC1 (a cleavage product of MAP1B), LC2 (a cleavage product of MAP1A) and LC3 (produced by one of the MAP1LC3 genes), can associate with the MAP1A or MAP1B heavy chains. Interacts with guanylate kinase-like domain of DLG1, DLG2 and DLG4. Binds to CSNK1D. Interacts with TIAM2. As to quaternary structure, interacts with ELAVL4. Phosphorylated by CSNK1D. In terms of processing, LC2 is generated from MAP1A by proteolytic processing. It is free to associate with both MAP1A and MAP1B. In terms of tissue distribution, brain, heart and muscle.

Its subcellular location is the cytoplasm. The protein resides in the cytoskeleton. Functionally, structural protein involved in the filamentous cross-bridging between microtubules and other skeletal elements. The sequence is that of Microtubule-associated protein 1A (Map1a) from Rattus norvegicus (Rat).